A 424-amino-acid chain; its full sequence is Double homeobox protein 4-like protein 2 (424 aa).

Over residues 1 to 10 (MALPTPSDST) the composition is skewed to polar residues. Disordered regions lie at residues 1-24 (MALP…RRRL), 72-102 (SRQL…TAVT), 148-167 (RHPG…CSAA), 218-362 (LQPS…LQEP), and 388-414 (QPLL…PLSE). 2 DNA-binding regions (homeobox) span residues 19-78 (GRRR…LRQH) and 94-153 (GRRK…PGQG). A compositionally biased stretch (basic and acidic residues) spans 265–274 (KSREDRDPQR). Low complexity-rich tracts occupy residues 278 to 302 (PGPC…LAPP) and 319 to 329 (AGAAWEPQAGA).

Its subcellular location is the nucleus. In terms of biological role, may be involved in transcriptional regulation. The chain is Double homeobox protein 4-like protein 2 (DUX4L2) from Homo sapiens (Human).